Reading from the N-terminus, the 660-residue chain is Probable Xaa-Pro aminopeptidase PTRG_10574 (660 aa).

Positions 274, 285, 435, and 476 each coordinate Mn(2+). A disordered region spans residues 641 to 660 (SAGSGSTPLWKPHNKQDKKN).

This sequence belongs to the peptidase M24B family. Mn(2+) serves as cofactor.

It carries out the reaction Release of any N-terminal amino acid, including proline, that is linked to proline, even from a dipeptide or tripeptide.. Its function is as follows. Catalyzes the removal of a penultimate prolyl residue from the N-termini of peptides. The protein is Probable Xaa-Pro aminopeptidase PTRG_10574 of Pyrenophora tritici-repentis (strain Pt-1C-BFP) (Wheat tan spot fungus).